The primary structure comprises 178 residues: Cytochrome b6-f complex iron-sulfur subunit (178 aa).

Residues 20–42 form a helical membrane-spanning segment; sequence LLTFGSVTGVALGALYPVVNYFI. The Rieske domain occupies 65–161; sequence ATGWLSSHPE…VSVENDNVFV (97 aa). [2Fe-2S] cluster contacts are provided by cysteine 107, histidine 109, cysteine 125, and histidine 128. A disulfide bond links cysteine 112 and cysteine 127.

The protein belongs to the Rieske iron-sulfur protein family. As to quaternary structure, the 4 large subunits of the cytochrome b6-f complex are cytochrome b6, subunit IV (17 kDa polypeptide, PetD), cytochrome f and the Rieske protein, while the 4 small subunits are PetG, PetL, PetM and PetN. The complex functions as a dimer. [2Fe-2S] cluster serves as cofactor.

The protein resides in the cellular thylakoid membrane. The enzyme catalyses 2 oxidized [plastocyanin] + a plastoquinol + 2 H(+)(in) = 2 reduced [plastocyanin] + a plastoquinone + 4 H(+)(out). Functionally, component of the cytochrome b6-f complex, which mediates electron transfer between photosystem II (PSII) and photosystem I (PSI), cyclic electron flow around PSI, and state transitions. The sequence is that of Cytochrome b6-f complex iron-sulfur subunit from Parasynechococcus marenigrum (strain WH8102).